The sequence spans 128 residues: Small ribosomal subunit protein uS11m (128 aa).

The protein belongs to the universal ribosomal protein uS11 family.

It is found in the mitochondrion. The chain is Small ribosomal subunit protein uS11m (RPS11) from Prototheca wickerhamii.